A 595-amino-acid chain; its full sequence is MLPVQTSNLAAAFTDAVRALAPADATLPAVTFERPKVAAHGDLACNVAMQVARALKSNPRELAQRIVAAVEADARAQGLVAGMDIAGPGFINLRLTPSAKADVLRAVLNEGDHYGARERGVHGQVLVEFVSANPTGPLHVGHGRQAALGDALANLLSWQGWHVHREFYYNDAGVQIQTLALSVQARARGLKPGDASWPEAAYNGDYIADIAADFLAGKTVSASDGEPVTASGNVEDIDSIRKFAVTYLRNEQDIDLQAFGVKFDRYYLESSLYSDGRVDAAVQSLIDKGKTYESEGALWLRTTDDGDDKDRVMKKSDGTYTYFVPDVAYHTTKWERGFTKVINVQGSDHHGTIARVRAGLQGLDIGIPQGYPDYVLHKMVTVMKNGEEVKISKRAGSYVTVRDLIEWSNGGDETIRGCLEQGVADWPAHFTRGRDAVRFFLLSRKADTEFVFDVDLALKQNDENPVYYVQYAHARICSIFESWGGADWESRLAELAGADLSAVTGADASAQALALGRRLAEFPDMLAAAAAELAPHAVAFYLRDLAGDFHAFYNADRVLVDDEAVKRARLALLAATRQVLRNGLAVIGVSAPRRM.

The short motif at 132-142 (ANPTGPLHVGH) is the 'HIGH' region element.

The protein belongs to the class-I aminoacyl-tRNA synthetase family. In terms of assembly, monomer.

The protein localises to the cytoplasm. The catalysed reaction is tRNA(Arg) + L-arginine + ATP = L-arginyl-tRNA(Arg) + AMP + diphosphate. The protein is Arginine--tRNA ligase of Cupriavidus taiwanensis (strain DSM 17343 / BCRC 17206 / CCUG 44338 / CIP 107171 / LMG 19424 / R1) (Ralstonia taiwanensis (strain LMG 19424)).